A 300-amino-acid chain; its full sequence is CDP-diacylglycerol--serine O-phosphatidyltransferase (300 aa).

A run of 6 helical transmembrane segments spans residues 10–30, 74–94, 95–115, 135–155, 162–182, and 207–227; these read AVNL…AGLT, IDSL…LYAT, MLST…CVVL, EFFV…LLAL, GWWT…MLLI, and LAIF…VIIL.

Belongs to the CDP-alcohol phosphatidyltransferase class-I family.

The protein resides in the cell membrane. It catalyses the reaction a CDP-1,2-diacyl-sn-glycerol + L-serine = a 1,2-diacyl-sn-glycero-3-phospho-L-serine + CMP + H(+). This Mycobacterium leprae (strain TN) protein is CDP-diacylglycerol--serine O-phosphatidyltransferase (pssA).